Here is a 262-residue protein sequence, read N- to C-terminus: uncharacterized protein (262 aa).

The protein belongs to the AB hydrolase superfamily. AB hydrolase 2 family.

This is an uncharacterized protein from Mycosarcoma maydis (Corn smut fungus).